Here is a 150-residue protein sequence, read N- to C-terminus: D-aminoacyl-tRNA deacylase (150 aa).

The Gly-cisPro motif, important for rejection of L-amino acids motif lies at 138 to 139 (GP).

This sequence belongs to the DTD family. As to quaternary structure, homodimer.

It is found in the cytoplasm. It catalyses the reaction glycyl-tRNA(Ala) + H2O = tRNA(Ala) + glycine + H(+). The enzyme catalyses a D-aminoacyl-tRNA + H2O = a tRNA + a D-alpha-amino acid + H(+). Its function is as follows. An aminoacyl-tRNA editing enzyme that deacylates mischarged D-aminoacyl-tRNAs. Also deacylates mischarged glycyl-tRNA(Ala), protecting cells against glycine mischarging by AlaRS. Acts via tRNA-based rather than protein-based catalysis; rejects L-amino acids rather than detecting D-amino acids in the active site. By recycling D-aminoacyl-tRNA to D-amino acids and free tRNA molecules, this enzyme counteracts the toxicity associated with the formation of D-aminoacyl-tRNA entities in vivo and helps enforce protein L-homochirality. The protein is D-aminoacyl-tRNA deacylase of Sorangium cellulosum (strain So ce56) (Polyangium cellulosum (strain So ce56)).